We begin with the raw amino-acid sequence, 298 residues long: Anamorsin homolog (298 aa).

The segment at 1–143 (MTQLIITHQS…IKAEKPSWKP (143 aa)) is N-terminal SAM-like domain. A linker region spans residues 143 to 162 (PEEGKVLVDDIDLEGSVPDI). [2Fe-2S] cluster-binding residues include Cys-175, Cys-182, Cys-185, and Cys-187. The fe-S binding site A stretch occupies residues 175 to 187 (CKSKERACNNCNC). [4Fe-4S] cluster-binding residues include Cys-218, Cys-221, Cys-229, and Cys-232. 2 short sequence motifs (cx2C motif) span residues 218–221 (CGNC) and 229–232 (CSGC). The segment at 218–232 (CGNCYLGDAFRCSGC) is fe-S binding site B.

It belongs to the anamorsin family. Monomer. [2Fe-2S] cluster is required as a cofactor. Requires [4Fe-4S] cluster as cofactor.

Its subcellular location is the cytoplasm. It localises to the mitochondrion intermembrane space. Functionally, component of the cytosolic iron-sulfur (Fe-S) protein assembly (CIA) machinery. Required for the maturation of extramitochondrial Fe-S proteins. Part of an electron transfer chain functioning in an early step of cytosolic Fe-S biogenesis, facilitating the de novo assembly of a [4Fe-4S] cluster on the cytosolic Fe-S scaffold complex. Electrons are transferred from NADPH via a FAD- and FMN-containing diflavin oxidoreductase. Together with the diflavin oxidoreductase, also required for the assembly of the diferric tyrosyl radical cofactor of ribonucleotide reductase (RNR), probably by providing electrons for reduction during radical cofactor maturation in the catalytic small subunit. This Cryptosporidium parvum (strain Iowa II) protein is Anamorsin homolog.